The primary structure comprises 111 residues: Protein GLUTAMINE DUMPER 6 (111 aa).

Residues 1-16 (MRPTPKVEIWKSPVPY) lie on the Extracellular side of the membrane. Residues 17–37 (LFGGLFLLVLLIALALLSLVC) form a helical membrane-spanning segment. At 38–111 (THQKPSSSSN…NCDNVTVIST (74 aa)) the chain is on the cytoplasmic side. Residues 40 to 49 (QKPSSSSNNN) show a composition bias toward polar residues. Positions 40 to 63 (QKPSSSSNNNHMDEEDDVGDKDAK) are disordered. Positions 75–79 (VILAG) match the VIMAG; degenerate motif.

This sequence belongs to the GLUTAMINE DUMPER 1 (TC 9.B.60) family. In terms of tissue distribution, expressed in the vascular tissues.

The protein localises to the membrane. Probable subunit of an amino acid transporter involved in the regulation of the amino acid metabolism. Stimulates amino acid export by activating nonselective amino acid facilitators. In Arabidopsis thaliana (Mouse-ear cress), this protein is Protein GLUTAMINE DUMPER 6 (GDU6).